Here is a 301-residue protein sequence, read N- to C-terminus: Formamidopyrimidine-DNA glycosylase (301 aa).

P2 acts as the Schiff-base intermediate with DNA in catalysis. The active-site Proton donor is E3. K58 functions as the Proton donor; for beta-elimination activity in the catalytic mechanism. The DNA site is built by H109, R131, and K174. The FPG-type zinc-finger motif lies at 265–301 (SVYDREGQACRTPGCGGTVARIVQAGRSTFYCATCQK). R291 serves as the catalytic Proton donor; for delta-elimination activity.

This sequence belongs to the FPG family. Monomer. Requires Zn(2+) as cofactor.

It catalyses the reaction Hydrolysis of DNA containing ring-opened 7-methylguanine residues, releasing 2,6-diamino-4-hydroxy-5-(N-methyl)formamidopyrimidine.. The enzyme catalyses 2'-deoxyribonucleotide-(2'-deoxyribose 5'-phosphate)-2'-deoxyribonucleotide-DNA = a 3'-end 2'-deoxyribonucleotide-(2,3-dehydro-2,3-deoxyribose 5'-phosphate)-DNA + a 5'-end 5'-phospho-2'-deoxyribonucleoside-DNA + H(+). In terms of biological role, involved in base excision repair of DNA damaged by oxidation or by mutagenic agents. Acts as a DNA glycosylase that recognizes and removes damaged bases. Has a preference for oxidized purines, such as 7,8-dihydro-8-oxoguanine (8-oxoG). Has AP (apurinic/apyrimidinic) lyase activity and introduces nicks in the DNA strand. Cleaves the DNA backbone by beta-delta elimination to generate a single-strand break at the site of the removed base with both 3'- and 5'-phosphates. This is Formamidopyrimidine-DNA glycosylase from Rhizobium leguminosarum bv. trifolii (strain WSM2304).